We begin with the raw amino-acid sequence, 211 residues long: ATP-dependent dethiobiotin synthetase BioD (211 aa).

10–15 contacts ATP; sequence GIGKTY. Threonine 14 lines the Mg(2+) pocket. The active site involves lysine 35. Serine 39 contacts substrate. Residues aspartate 44, 105 to 108, and 165 to 166 each bind ATP; these read EGAG and NC. Aspartate 44 and glutamate 105 together coordinate Mg(2+).

It belongs to the dethiobiotin synthetase family. As to quaternary structure, homodimer. Requires Mg(2+) as cofactor.

The protein resides in the cytoplasm. The enzyme catalyses (7R,8S)-7,8-diammoniononanoate + CO2 + ATP = (4R,5S)-dethiobiotin + ADP + phosphate + 3 H(+). Its pathway is cofactor biosynthesis; biotin biosynthesis; biotin from 7,8-diaminononanoate: step 1/2. Functionally, catalyzes a mechanistically unusual reaction, the ATP-dependent insertion of CO2 between the N7 and N8 nitrogen atoms of 7,8-diaminopelargonic acid (DAPA, also called 7,8-diammoniononanoate) to form a ureido ring. This Methanococcus vannielii (strain ATCC 35089 / DSM 1224 / JCM 13029 / OCM 148 / SB) protein is ATP-dependent dethiobiotin synthetase BioD.